A 163-amino-acid polypeptide reads, in one-letter code: MKFFAVLALCIVGAIAHPLTSDEAALVKSSWAQVKHNEVDILYTVFKAYPDIQARFPQFAGKDLDTIKTSGQFATHATRIVSFLSELIALSGSESNLSAIYGLISKMGTDHKNRGITQTQFNKFRTALVSYISSNVAWGDNVAAAWTHALDNVYTAVFQIVTA.

A signal peptide spans 1-16; it reads MKFFAVLALCIVGAIA. Positions 18–162 constitute a Globin domain; it reads PLTSDEAALV…VYTAVFQIVT (145 aa). Residues His-76 and His-111 each coordinate heme b.

It belongs to the globin family.

This chain is Globin CTT-Z (CTT-Z), found in Chironomus thummi thummi (Midge).